A 340-amino-acid polypeptide reads, in one-letter code: Dihydroorotate dehydrogenase (quinone) (340 aa).

FMN is bound by residues 65-69 (AGADK) and T89. Residue K69 coordinates substrate. 114 to 118 (NRNGF) contributes to the substrate binding site. Residues N142 and N175 each contribute to the FMN site. Residue N175 participates in substrate binding. S178 functions as the Nucleophile in the catalytic mechanism. N180 contributes to the substrate binding site. FMN is bound by residues K220 and T248. A substrate-binding site is contributed by 249-250 (NT). Residues G271, G300, and 321–322 (YS) each bind FMN.

Belongs to the dihydroorotate dehydrogenase family. Type 2 subfamily. As to quaternary structure, monomer. Requires FMN as cofactor.

The protein localises to the cell membrane. The catalysed reaction is (S)-dihydroorotate + a quinone = orotate + a quinol. It participates in pyrimidine metabolism; UMP biosynthesis via de novo pathway; orotate from (S)-dihydroorotate (quinone route): step 1/1. Functionally, catalyzes the conversion of dihydroorotate to orotate with quinone as electron acceptor. In Actinobacillus succinogenes (strain ATCC 55618 / DSM 22257 / CCUG 43843 / 130Z), this protein is Dihydroorotate dehydrogenase (quinone).